An 882-amino-acid polypeptide reads, in one-letter code: Alanine--tRNA ligase (882 aa).

Positions 574, 578, 682, and 686 each coordinate Zn(2+). Residues 853–882 form a disordered region; sequence GGRGGGKGALAQGGGLDPRKAREALPGLLP. Gly residues predominate over residues 854 to 868; that stretch reads GRGGGKGALAQGGGL.

It belongs to the class-II aminoacyl-tRNA synthetase family. Zn(2+) is required as a cofactor.

It localises to the cytoplasm. The enzyme catalyses tRNA(Ala) + L-alanine + ATP = L-alanyl-tRNA(Ala) + AMP + diphosphate. Catalyzes the attachment of alanine to tRNA(Ala) in a two-step reaction: alanine is first activated by ATP to form Ala-AMP and then transferred to the acceptor end of tRNA(Ala). Also edits incorrectly charged Ser-tRNA(Ala) and Gly-tRNA(Ala) via its editing domain. The polypeptide is Alanine--tRNA ligase (Thermus thermophilus (strain ATCC 27634 / DSM 579 / HB8)).